Reading from the N-terminus, the 254-residue chain is Mitochondrial cardiolipin hydrolase (254 aa).

Topologically, residues 1-9 (MERFRWQVA) are mitochondrial intermembrane. Residues 1–43 (MERFRWQVAAVAAVGLALALEALPSVLCWLRAGRRQQQRPPRR) are required for mitochondrial localization. Residues 10 to 32 (AVAAVGLALALEALPSVLCWLRA) form a helical membrane-spanning segment. The Cytoplasmic segment spans residues 33-254 (GRRQQQRPPR…SKCSHHLSQV (222 aa)). The C3H1-type; atypical zinc-finger motif lies at 49–82 (PSQVTCTEALLQAPGEAPSGPPAGCRCSLPHGES). The region spanning 155–182 (DLGYMHHKFAIVDKKVLITGSLNWTTQA) is the PLD phosphodiesterase domain. Active-site residues include histidine 160, lysine 162, and aspartate 167.

The protein belongs to the phospholipase D family. MitoPLD/Zucchini subfamily. Homodimer. Interacts with MOV10L1. Interacts with MIGA1 and MIGA2; possibly facilitating homodimer formation. Interacts with GK2.

It localises to the mitochondrion outer membrane. Its subcellular location is the nucleus membrane. It is found in the cell membrane. The protein localises to the golgi apparatus. It catalyses the reaction a cardiolipin + H2O = a 1,2-diacyl-sn-glycero-3-phospho-(1'-sn-glycerol) + a 1,2-diacyl-sn-glycero-3-phosphate + H(+). Its activity is regulated as follows. Single stranded DNA (ssDNA) hydrolase activity does not depend upon, but is stimulated by the presence of Ca(2+) and Mn(2+). MIGA1 and MIGA2 increase PLD6 self-association affinity and affects the homodimer conformation facilitating its phospholipase activity over the nuclease activity. MYC induces its expression and stimulates its phospholipase activity. Presents phospholipase and nuclease activities, depending on the different physiological conditions. Interaction with Mitoguardin (MIGA1 or MIGA2) affects the dimer conformation, facilitating the lipase activity over the nuclease activity. Plays a key role in mitochondrial fusion and fission via its phospholipase activity. In its phospholipase role, it uses the mitochondrial lipid cardiolipin as substrate to generate phosphatidate (PA or 1,2-diacyl-sn-glycero-3-phosphate), a second messenger signaling lipid. Production of PA facilitates Mitofusin-mediated fusion, whereas the cleavage of PA by the Lipin family of phosphatases produces diacylgycerol (DAG) which promotes mitochondrial fission. Both Lipin and DAG regulate mitochondrial dynamics and membrane fusion/fission, important processes for adapting mitochondrial metabolism to changes in cell physiology. Mitochondrial fusion enables cells to cope with the increased nucleotide demand during DNA synthesis. Mitochondrial function and dynamics are closely associated with biological processes such as cell growth, proliferation, and differentiation. Mediator of MYC activity, promotes mitochondrial fusion and activates AMPK which in turn inhibits YAP/TAZ, thereby inducing cell growth and proliferation. The endonuclease activity plays a critical role in PIWI-interacting RNA (piRNA) biogenesis during spermatogenesis. Implicated in spermatogenesis and sperm fertility in testicular germ cells, its single strand-specific nuclease activity is critical for the biogenesis/maturation of PIWI-interacting RNA (piRNA). MOV10L1 selectively binds to piRNA precursors and funnels them to the endonuclease that catalyzes the first cleavage step of piRNA processing to generate piRNA intermediate fragments that are subsequently loaded to Piwi proteins. Cleaves either DNA or RNA substrates with similar affinity, producing a 5' phosphate end, in this way it participates in the processing of primary piRNA transcripts. piRNAs provide essential protection against the activity of mobile genetic elements. piRNA-mediated transposon silencing is thus critical for maintaining genome stability, in particular in germline cells when transposons are mobilized as a consequence of wide-spread genomic demethylation. PA may act as signaling molecule in the recognition/transport of the precursor RNAs of primary piRNAs. Interacts with tesmin in testes, suggesting a role in spermatogenesis via association with its interacting partner. The chain is Mitochondrial cardiolipin hydrolase (PLD6) from Canis lupus familiaris (Dog).